The following is a 318-amino-acid chain: Probable cell division protein WhiA (318 aa).

A DNA-binding region (H-T-H motif) is located at residues 281–314 (SLKELGQMLVPPVGKSGVNHRLRKIEEISKKLKE).

Belongs to the WhiA family.

Functionally, involved in cell division and chromosome segregation. This chain is Probable cell division protein WhiA, found in Thermoanaerobacter sp. (strain X514).